A 215-amino-acid chain; its full sequence is Small ribosomal subunit protein uS7 (215 aa).

This sequence belongs to the universal ribosomal protein uS7 family. In terms of assembly, part of the 30S ribosomal subunit.

Its function is as follows. One of the primary rRNA binding proteins, it binds directly to 16S rRNA where it nucleates assembly of the head domain of the 30S subunit. Is located at the subunit interface close to the decoding center. In Thermococcus celer, this protein is Small ribosomal subunit protein uS7.